The primary structure comprises 779 residues: Potassium/sodium hyperpolarization-activated cyclic nucleotide-gated channel 3 (779 aa).

Residues 1–47 (MEEEARPAAGAGEAATPARETPPAAPAQARAASGGVPESAPEPKRRQ) form a disordered region. Over 1–96 (MEEEARPAAG…PYSDFRFYWD (96 aa)) the chain is Cytoplasmic. Residues 7-32 (PAAGAGEAATPARETPPAAPAQARAA) show a composition bias toward low complexity. An involved in subunit assembly region spans residues 45 to 90 (RRQLGTLLQPTVNKFSLRVFGSHKAVEIEQERVKSAGAWIIHPYSD). A helical membrane pass occupies residues 97-117 (LIMLLLMVGNLIVLPVGITFF). The Extracellular segment spans residues 118 to 123 (KEENSP). A helical transmembrane segment spans residues 124-144 (PWIVFNVLSDTFFLLDLVLNF). Residues 145 to 170 (RTGIVVEEGAEILLAPRAIRTRYLRT) are Cytoplasmic-facing. Residues 171–191 (WFLVDLISSIPVDYIFLVVEL) form a helical membrane-spanning segment. The Extracellular portion of the chain corresponds to 192-200 (EPRLDAEVY). The chain crosses the membrane as a helical; Voltage-sensor span at residues 201–221 (KTARALRIVRFTKILSLLRLL). Residues 222 to 252 (RLSRLIRYIHQWEEIFHMTYDLASAVVRIFN) are Cytoplasmic-facing. Residues 253–273 (LIGMMLLLCHWDGCLQFLVPM) traverse the membrane as a helical segment. Topologically, residues 274 to 296 (LQDFPSDCWVSMNRMVNHSWGRQ) are extracellular. Asn290 carries an N-linked (GlcNAc...) asparagine glycan. The pore-forming intramembrane region spans 297 to 318 (YSHALFKAMSHMLCIGYGQQAP). Residues 319–328 (VGMPDVWLTM) lie on the Extracellular side of the membrane. A helical membrane pass occupies residues 329–349 (LSMIVGATCYAMFIGHATALI). Residues 350 to 779 (QSLDSSRRQY…PRGPQISANM (430 aa)) lie on the Cytoplasmic side of the membrane. The interaction with KCTD3 stretch occupies residues 353 to 779 (DSSRRQYQEK…PRGPQISANM (427 aa)). 3',5'-cyclic AMP contacts are provided by Gly491, Glu492, Cys494, Arg501, Thr502, Arg542, and Arg545. The tract at residues 549 to 569 (KNSILQRKRSEPSPGSSGGVM) is disordered. At Ser633 the chain carries Phosphoserine. Residues 687-697 (SLSRTGRSQVS) are compositionally biased toward polar residues. Residues 687–779 (SLSRTGRSQV…PRGPQISANM (93 aa)) are disordered.

Belongs to the potassium channel HCN family. As to quaternary structure, homotetramer. The potassium channel is composed of a homo- or heterotetrameric complex of pore-forming subunits. Interacts with HCN1. Interacts with KCTD3; this interaction increases cell surface expression and current density of this channel. Interacts with PEX5L. Detected in hypothalamus, amygdala, olfactory bulb, hippocampus and retina (at protein level). Highly expressed in brain and heart, in particular in ventricle, atrium and in sinoatrial node (SAN). Detected at low levels in skeletal muscle and lung. Expressed in DRG neurons.

It is found in the cell membrane. It catalyses the reaction K(+)(in) = K(+)(out). It carries out the reaction Na(+)(in) = Na(+)(out). Its activity is regulated as follows. Unlike HCN2 and HCN4, HCN3 is insensitive to cyclic nucleotides, such as cAMP or cGMP. This lack of sensitivity of HCN3, despite harboring a functional cyclic nucleotide-binding domain (CNBD), may be explained by its shorter C-terminal sequence, which may alter the normal autoinhibition of the channel. Inhibited by Cs(1+) and ivabradine. Phosphatidylinositol-4,5-bisphosphate (PIP(2)) shifts HCN3 activation to more depolarized potentials and accelerated activation kinetics. Functionally, hyperpolarization-activated ion channel that are permeable to sodium and potassium ions, with an about 3:1 preference for potassium ions. Contributes to the native pacemaker currents in heart (If) and in neurons (Ih). In particular, plays a pivotal role in maintaining excitability and promoting rhythmic burst firing within hypothalamic nuclei. Exerts a significant influence on the configuration of the cardiac action potential waveform. Does not appear to play a prominent role in the processing of acute, neuropathic, or inflammatory pain. The polypeptide is Potassium/sodium hyperpolarization-activated cyclic nucleotide-gated channel 3 (Hcn3) (Mus musculus (Mouse)).